The chain runs to 293 residues: Nucleotide-binding protein cauri_1197 (293 aa).

An ATP-binding site is contributed by 16–23 (GMSGGGLT). Residue 67–70 (DVRS) coordinates GTP.

Belongs to the RapZ-like family.

Its function is as follows. Displays ATPase and GTPase activities. This Corynebacterium aurimucosum (strain ATCC 700975 / DSM 44827 / CIP 107346 / CN-1) (Corynebacterium nigricans) protein is Nucleotide-binding protein cauri_1197.